The sequence spans 2225 residues: Multifunctional protein CAD (2225 aa).

An N-acetylalanine modification is found at Ala-2. The segment at 2–365 is GATase (Glutamine amidotransferase); sequence AALVLEDGSV…TVREAVAGNP (364 aa). The L-glutamine site is built by Ser-44, Gly-222, and Gly-224. In terms of domain architecture, Glutamine amidotransferase type-1 spans 177 to 363; sequence RICALDCGLK…LETVREAVAG (187 aa). Cys-252 serves as the catalytic Nucleophile; for GATase activity. 5 residues coordinate L-glutamine: Leu-253, Gln-256, Asn-294, Gly-296, and Phe-297. Residues His-336 and Glu-338 each act as for GATase activity in the active site. The segment at 366–394 is linker; the sequence is GGQTVKERLVQRLCPPGLLIPGSGLPPPR. The interval 395–933 is CPSase A; that stretch reads KVLILGSGGL…NTHDLDFRTP (539 aa). The segment at 395–1455 is CPSase (Carbamoyl phosphate synthase); that stretch reads KVLILGSGGL…APPLKVHVDC (1061 aa). Thr-456 is subject to Phosphothreonine; by MAPK1. Positions 515, 555, 561, 562, 592, 599, 625, 626, 627, 668, and 682 each coordinate ATP. An ATP-grasp 1 domain is found at 519–711; that stretch reads AARMAEIGEH…LAYVAAKLAL (193 aa). Residues Gln-668, Glu-682, and Asn-684 each coordinate Mg(2+). Residues Gln-668, Glu-682, and Asn-684 each coordinate Mn(2+). Residue Lys-747 is modified to N6-acetyllysine. Positions 934–1455 are CPSase B; it reads HVLVLGSGVY…APPLKVHVDC (522 aa). A Phosphoserine modification is found at Ser-1038. The 192-residue stretch at 1052–1243 folds into the ATP-grasp 2 domain; it reads SRLLDTIGIS…LVALATRIIM (192 aa). Positions 1088, 1127, 1129, 1134, 1159, 1160, 1161, 1162, 1202, and 1214 each coordinate ATP. Gln-1202, Glu-1214, and Asn-1216 together coordinate Mg(2+). Mn(2+) contacts are provided by Gln-1202, Glu-1214, and Asn-1216. The region spanning 1308–1462 is the MGS-like domain; the sequence is FKIPKKNILL…VDCMTSQKLV (155 aa). Position 1406 is a phosphoserine; by PKA (Ser-1406). Lys-1411 is modified (N6-acetyllysine). Residues 1456-1788 are DHOase (dihydroorotase); it reads MTSQKLVRLP…VKGTIRRVVL (333 aa). His-1471 and His-1473 together coordinate Zn(2+). (S)-dihydroorotate contacts are provided by Arg-1475 and Asn-1505. Lys-1556, His-1590, Cys-1613, His-1614, and Glu-1637 together coordinate Zn(2+). At Lys-1556 the chain carries N6-carboxylysine. Arg-1661 contributes to the (S)-dihydroorotate binding site. Asp-1686 serves as a coordination point for Zn(2+). The active-site For DHOase activity is the Asp-1686. Positions 1690 and 1702 each coordinate (S)-dihydroorotate. A linker region spans residues 1789–1917; it reads RGEVAYIDGQ…GLLHPQTSPL (129 aa). Residues 1813–1911 are disordered; sequence PQGAVPQPPP…QNLGSSGLLH (99 aa). Over residues 1825–1834 the composition is skewed to low complexity; it reads PATTEITTTP. At Ser-1859 the chain carries Phosphoserine; by RPS6KB1 and PKA. Residues 1866–1878 show a composition bias toward basic and acidic residues; that stretch reads EEPKEKPSRKVVE. Ser-1873 is modified (phosphoserine; by PKC; in vitro). Residue Thr-1884 is modified to Phosphothreonine. The segment covering 1899-1911 has biased composition (polar residues); it reads ASPQNLGSSGLLH. Ser-1900 and Ser-1938 each carry phosphoserine. The segment at 1918 to 2225 is ATCase (Aspartate transcarbamylase); it reads LHSLVGQHIL…ALLATVLGRF (308 aa). Carbamoyl phosphate-binding residues include Arg-1975 and Thr-1976. Lys-2003 contributes to the L-aspartate binding site. 3 residues coordinate carbamoyl phosphate: Arg-2024, His-2052, and Gln-2055. 2 residues coordinate L-aspartate: Arg-2085 and Arg-2146. Carbamoyl phosphate is bound by residues Met-2185 and Pro-2186.

In the N-terminal section; belongs to the CarA family. It in the 2nd section; belongs to the CarB family. This sequence in the 3rd section; belongs to the metallo-dependent hydrolases superfamily. DHOase family. CAD subfamily. The protein in the C-terminal section; belongs to the aspartate/ornithine carbamoyltransferase superfamily. ATCase family. Homohexamer. Interacts with CIPC. It depends on Zn(2+) as a cofactor. The cofactor is Mg(2+). Mn(2+) serves as cofactor. Activated by MAP kinase (Erk1/2) phosphorylation just prior to the S phase of the cell cycle, when the demand for pyrimidine nucleotides is greatest, and down-regulated as the cells emerge from S phase by protein kinase A (PKA) phosphorylation. Phosphorylation at Ser-1859 by RPS6KB1 downstream of MTOR promotes oligomerization and stimulates dihydroorotase activity. Phosphorylation at Ser-1406 reduces sensitivity to feedback inhibition by UTP.

The protein resides in the cytoplasm. The protein localises to the nucleus. It carries out the reaction hydrogencarbonate + L-glutamine + 2 ATP + H2O = carbamoyl phosphate + L-glutamate + 2 ADP + phosphate + 2 H(+). The enzyme catalyses L-glutamine + H2O = L-glutamate + NH4(+). The catalysed reaction is hydrogencarbonate + NH4(+) + 2 ATP = carbamoyl phosphate + 2 ADP + phosphate + 2 H(+). It catalyses the reaction carbamoyl phosphate + L-aspartate = N-carbamoyl-L-aspartate + phosphate + H(+). It carries out the reaction (S)-dihydroorotate + H2O = N-carbamoyl-L-aspartate + H(+). The protein operates within pyrimidine metabolism; UMP biosynthesis via de novo pathway; (S)-dihydroorotate from bicarbonate: step 1/3. It functions in the pathway pyrimidine metabolism; UMP biosynthesis via de novo pathway; (S)-dihydroorotate from bicarbonate: step 2/3. Its pathway is pyrimidine metabolism; UMP biosynthesis via de novo pathway; (S)-dihydroorotate from bicarbonate: step 3/3. Its activity is regulated as follows. Allosterically regulated and controlled by phosphorylation. 5-phosphoribose 1-diphosphate (PRPP) is an activator while UMP and UTP are inhibitors of the CPSase reaction. Multifunctional protein that encodes the first 3 enzymatic activities of the de novo pyrimidine pathway: carbamoylphosphate synthetase (CPSase; EC 6.3.5.5), aspartate transcarbamylase (ATCase; EC 2.1.3.2) and dihydroorotase (DHOase; EC 3.5.2.3). The CPSase-function is accomplished in 2 steps, by a glutamine-dependent amidotransferase activity (GATase) that binds and cleaves glutamine to produce ammonia, followed by an ammonium-dependent carbamoyl phosphate synthetase, which reacts with the ammonia, hydrogencarbonate and ATP to form carbamoyl phosphate. The endogenously produced carbamoyl phosphate is sequestered and channeled to the ATCase active site. ATCase then catalyzes the formation of carbamoyl-L-aspartate from L-aspartate and carbamoyl phosphate. In the last step, DHOase catalyzes the cyclization of carbamoyl aspartate to dihydroorotate. The chain is Multifunctional protein CAD (CAD) from Mesocricetus auratus (Golden hamster).